The following is a 268-amino-acid chain: Tryptophan synthase alpha chain (268 aa).

Active-site proton acceptor residues include glutamate 47 and aspartate 58.

It belongs to the TrpA family. In terms of assembly, tetramer of two alpha and two beta chains.

It is found in the plastid. The protein localises to the chloroplast. It carries out the reaction (1S,2R)-1-C-(indol-3-yl)glycerol 3-phosphate + L-serine = D-glyceraldehyde 3-phosphate + L-tryptophan + H2O. The protein operates within amino-acid biosynthesis; L-tryptophan biosynthesis; L-tryptophan from chorismate: step 5/5. Its function is as follows. The alpha subunit is responsible for the aldol cleavage of indoleglycerol phosphate to indole and glyceraldehyde 3-phosphate. The polypeptide is Tryptophan synthase alpha chain (Gracilaria tenuistipitata var. liui (Red alga)).